Reading from the N-terminus, the 357-residue chain is tRNA N6-adenosine threonylcarbamoyltransferase (357 aa).

Fe cation is bound by residues His115 and His119. Substrate is bound by residues 137–141 (LASGG), Asp170, Gly183, and Asn281. Fe cation is bound at residue Asp309.

This sequence belongs to the KAE1 / TsaD family. Fe(2+) is required as a cofactor.

Its subcellular location is the cytoplasm. The enzyme catalyses L-threonylcarbamoyladenylate + adenosine(37) in tRNA = N(6)-L-threonylcarbamoyladenosine(37) in tRNA + AMP + H(+). Required for the formation of a threonylcarbamoyl group on adenosine at position 37 (t(6)A37) in tRNAs that read codons beginning with adenine. Is involved in the transfer of the threonylcarbamoyl moiety of threonylcarbamoyl-AMP (TC-AMP) to the N6 group of A37, together with TsaE and TsaB. TsaD likely plays a direct catalytic role in this reaction. The chain is tRNA N6-adenosine threonylcarbamoyltransferase from Nitrobacter hamburgensis (strain DSM 10229 / NCIMB 13809 / X14).